The following is a 149-amino-acid chain: Calmodulin (149 aa).

Alanine 2 is modified (N-acetylalanine). 4 consecutive EF-hand domains span residues glutamate 8–asparagine 43, proline 44–aspartate 79, aspartate 81–lysine 116, and leucine 117–lysine 149. Residues aspartate 21, aspartate 23, aspartate 25, threonine 27, glutamate 32, aspartate 57, aspartate 59, asparagine 61, threonine 63, glutamate 68, aspartate 94, aspartate 96, asparagine 98, and glutamate 105 each contribute to the Ca(2+) site. An N6,N6,N6-trimethyllysine modification is found at lysine 116. Ca(2+) contacts are provided by aspartate 130, aspartate 132, aspartate 134, glutamine 136, and glutamate 141.

It belongs to the calmodulin family.

Its function is as follows. Calmodulin mediates the control of a large number of enzymes, ion channels and other proteins by Ca(2+). Among the enzymes to be stimulated by the calmodulin-Ca(2+) complex are a number of protein kinases and phosphatases. The sequence is that of Calmodulin from Karlodinium veneficum (Dinoflagellate).